Here is a 1041-residue protein sequence, read N- to C-terminus: Nuclear migration protein unc-83 (1041 aa).

Disordered stretches follow at residues 258–283 (VGHL…TETV), 453–498 (IHGQ…LEDD), and 613–646 (IRNR…DSIS). Residues 456-465 (QKKPLRRASR) show a composition bias toward basic residues. Residues 613 to 626 (IRNRDSDTAPEHSD) show a composition bias toward basic and acidic residues. Coiled coils occupy residues 785–816 (RSKE…DLLA) and 931–951 (KAEL…FNDM). Residues 986 to 1041 (TENEPLTIAEAISSSRLIKFTFALSLLAALAAIFYYHVFGKPFGPHVTYVNGPPPV) form the KASH domain. A helical; Anchor for type IV membrane protein membrane pass occupies residues 1005–1024 (FTFALSLLAALAAIFYYHVF).

As to quaternary structure, component of the unc-83-unc-84 LINC complex which contains at least unc-83 and unc-84. Within the unc-83-unc-84 LINC complex interacts with unc-84 (via C-terminus); the interaction is probably required to recruit unc-83 to the nuclear envelope where it then recruits dynein and kinesin-1 complexes to regulate nuclear migration. Interacts with bicd-1 and dlc-1. Interacts with nud-2 (via C-terminus); the interaction is direct, and is required for recruitment of nud-2 to the nuclear envelope. Interacts with klc-2; the interaction is direct. In terms of tissue distribution, predominantly expressed in migratory nuclei. Expressed in a variety of cell-types, including cells around the pharynx and in the uterus.

It localises to the nucleus membrane. The protein resides in the nucleus outer membrane. In terms of biological role, cargo-specific adapter that is involved in nuclear migration during development and thereafter. Component of the unc-83-unc-84 LINC (LInker of Nucleoskeleton and Cytoskeleton) complex where it interacts with unc-84 to form a bridge connecting the nuclear envelope to the cytoskeleton which allows for nuclear transport along microtubules. Within the complex, connects the nuclear envelope to the microtubule cytoskeleton through the kinesin-1 light chain protein klc-2 (most likely within the Kinesin 1 motor complex) to regulate nuclear migrations. Moreover, within the complex, also recruits the large microtubule-associated bicd-1-dlc-1-egal-1 and lis-1-nud-2 complexes to the nuclear envelope to regulate both the bidirectional migration of nuclei and the extent of nuclear migrations. Not required for centrosome attachment to the nucleus. This chain is Nuclear migration protein unc-83, found in Caenorhabditis elegans.